A 462-amino-acid chain; its full sequence is GTPase HflX (462 aa).

The Hflx-type G domain occupies 255-452 (PAVGIVGYTN…LLEEKIYNLP (198 aa)). GTP contacts are provided by residues 261 to 268 (GYTNAGKS), 286 to 290 (FATLD), 308 to 311 (DTVG), 374 to 377 (NKID), and 430 to 432 (SAY). The Mg(2+) site is built by S268 and T288.

This sequence belongs to the TRAFAC class OBG-HflX-like GTPase superfamily. HflX GTPase family. Monomer. Associates with the 50S ribosomal subunit. Mg(2+) serves as cofactor.

The protein localises to the cytoplasm. Functionally, GTPase that associates with the 50S ribosomal subunit and may have a role during protein synthesis or ribosome biogenesis. This is GTPase HflX from Leptospira borgpetersenii serovar Hardjo-bovis (strain JB197).